A 463-amino-acid chain; its full sequence is Glutathione amide reductase (463 aa).

Ni(2+)-binding residues include threonine 2, glutamine 3, and histidine 4. FAD contacts are provided by residues 14 to 15 (SG), glutamate 34, and threonine 41. A disulfide bond links cysteine 42 and cysteine 47. FAD contacts are provided by residues lysine 50 and 113 to 114 (HA). Lysine 50 contributes to the NAD(+) binding site. Residues 174–180 (AGYIGIE), 197–198 (LE), valine 230, and glycine 261 contribute to the NAD(+) site. FAD-binding positions include aspartate 302 and 308-310 (QLT). 2 residues coordinate NAD(+): glutamine 308 and valine 341. Residue histidine 437 participates in FAD binding. Histidine 437 serves as the catalytic Proton acceptor.

It belongs to the class-I pyridine nucleotide-disulfide oxidoreductase family. In terms of assembly, homodimer. It depends on FAD as a cofactor.

It catalyses the reaction 2 glutathione amide + NAD(+) = glutathione amide disulfide + NADH + H(+). Functionally, catalyzes the reduction of glutathione amide disulfide (GASSAG) to restore glutathione amide (GASH) in the presence of NADH. May play a role in GASH metabolism under anaerobic conditions as a sulfide carrier necessary for cytoplasmic sulfide oxidation. This chain is Glutathione amide reductase, found in Marichromatium gracile (Chromatium gracile).